Consider the following 410-residue polypeptide: Homeobox protein Hox-A3a (410 aa).

Residues 79 to 126 (VTDTSDNKQPPTAPSGPSSPSSLNQIPNIDSAAKNPVHVSPTPSTRKH) are disordered. An Antp-type hexapeptide motif is present at residues 127–132 (IFPWMK). The homeobox DNA-binding region spans 163-222 (SKRARTAYTSAQLVELEKEFHFNRYLCRPRRVEMANLLNLTERQIKIWFQNRRMKYKKDQ). The segment at 222–249 (QKGLGMMPSPGAQSPHSPVSLSSGGGGG) is disordered.

The protein belongs to the Antp homeobox family.

Its subcellular location is the nucleus. Functionally, sequence-specific transcription factor which is part of a developmental regulatory system that provides cells with specific positional identities on the anterior-posterior axis. The chain is Homeobox protein Hox-A3a (hoxa3a) from Danio rerio (Zebrafish).